Reading from the N-terminus, the 312-residue chain is Sulfate adenylyltransferase subunit 2 (312 aa).

It belongs to the PAPS reductase family. CysD subfamily. As to quaternary structure, heterodimer composed of CysD, the smaller subunit, and CysN.

The enzyme catalyses sulfate + ATP + H(+) = adenosine 5'-phosphosulfate + diphosphate. The protein operates within sulfur metabolism; hydrogen sulfide biosynthesis; sulfite from sulfate: step 1/3. With CysN forms the ATP sulfurylase (ATPS) that catalyzes the adenylation of sulfate producing adenosine 5'-phosphosulfate (APS) and diphosphate, the first enzymatic step in sulfur assimilation pathway. APS synthesis involves the formation of a high-energy phosphoric-sulfuric acid anhydride bond driven by GTP hydrolysis by CysN coupled to ATP hydrolysis by CysD. In Methylobacterium nodulans (strain LMG 21967 / CNCM I-2342 / ORS 2060), this protein is Sulfate adenylyltransferase subunit 2.